The primary structure comprises 210 residues: Pre-mRNA-splicing factor 38 (210 aa).

Positions 181-210 (PLSSSSDEEDDDEEQISKLESNEGAVDRNI) are disordered. Residues 195 to 210 (QISKLESNEGAVDRNI) show a composition bias toward basic and acidic residues.

It belongs to the PRP38 family. As to quaternary structure, component of the 25S U4/U6.U5 tri-snRNP particle, a subcomplex of the spliceosome.

The protein localises to the nucleus. In terms of biological role, required for pre-mRNA splicing and maintenance of stable U6 small nuclear RNA levels. Implicated in the formation of stable and biologically active snRNP structures. As part of the U4/U6.U5 tri-snRNP particle, dispensible for spliceosome assembly, but required for conformational changes, which result in U4 snRNA release and the subsequent catalytic activation of the spliceosome. In Schizosaccharomyces pombe (strain 972 / ATCC 24843) (Fission yeast), this protein is Pre-mRNA-splicing factor 38.